The chain runs to 219 residues: Large ribosomal subunit protein eL13 (219 aa).

The interval 198-219 (KDAAENPDDVTKAPTAVKRNKT) is disordered.

This sequence belongs to the eukaryotic ribosomal protein eL13 family. In terms of assembly, component of the 60S large ribosomal subunit (LSU).

It localises to the cytoplasm. Its function is as follows. Component of the ribosome, a large ribonucleoprotein complex responsible for the synthesis of proteins in the cell. The small ribosomal subunit (SSU) binds messenger RNAs (mRNAs) and translates the encoded message by selecting cognate aminoacyl-transfer RNA (tRNA) molecules. The large subunit (LSU) contains the ribosomal catalytic site termed the peptidyl transferase center (PTC), which catalyzes the formation of peptide bonds, thereby polymerizing the amino acids delivered by tRNAs into a polypeptide chain. The nascent polypeptides leave the ribosome through a tunnel in the LSU and interact with protein factors that function in enzymatic processing, targeting, and the membrane insertion of nascent chains at the exit of the ribosomal tunnel. As part of the LSU, it is probably required for its formation and the maturation of rRNAs. The polypeptide is Large ribosomal subunit protein eL13 (RpL13) (Spodoptera frugiperda (Fall armyworm)).